The sequence spans 305 residues: Oxidoreductase swnR (305 aa).

This sequence belongs to the NmrA-type oxidoreductase family. Isoflavone reductase subfamily.

The catalysed reaction is L-pipecolate + O2 = L-1-piperideine-6-carboxylate + H2O2 + H(+). It participates in mycotoxin biosynthesis. In terms of biological role, oxidoreductase; part of the gene cluster that mediates the biosynthesis of swainsonine (SW), a cytotoxic fungal alkaloid and a potential cancer therapy drug. Swainsonine production occurs via a multibranched pathway and is dispensable for fungal colonization of plants and infection of insect hosts. The first step of swainsonine biosynthesis is the production of the precursor pipecolic acid (PA) via conversion of L-lysine (Lys) to 1-piperideine-6-carboxylate (P6C) by the aminotransferase swnA, the latter being further reduced to PA by the reductase swnR. PA can be converted from lysine by both the SW biosynthetic cluster and the unclustered genes such as lysine cyclodeaminase. The PKS-NRPS hybrid synthetase swnK uptakes and condensates PA and malonyl-CoA with and without skipping of the ketoreductase (KR) domain in order to produce 3 intermediates, 1-oxoindolizidine, (1S)-1-hydroxyindolizin, and (1R)-1-hydroxyindolizine; with the transisomer (1S)-1-hydroxyindolizin being predominant. The terminal thioester reductase (TE) domain of swnK is involved in reduction of the thioester bond to release the intermediate aldehydes. The oxidoreductase swnN could contribute to the reduction of 1-oxoindolizidine to (1S)-1-hydroxyindolizin and (1R)-1-hydroxyindolizine, contributing to the major route of SW production. The dioxygenase swnH2 would be responsible for the oxidization of (1R)-1-hydroxyindolizine into (1R,2S)-1,2-dihydroxyindolizine and of (1S)-1-hydroxyindolizin to yield both (1R,2S)-1,2-dihydroxyindolizine and (1S,2S)-1,2-dihydroxyindolizine. The dioxygenase swnH1 then performs the conversion of the 1,2-dihydroxyindolizine epimers to SW. The polypeptide is Oxidoreductase swnR (Metarhizium robertsii (strain ARSEF 23 / ATCC MYA-3075) (Metarhizium anisopliae (strain ARSEF 23))).